A 134-amino-acid polypeptide reads, in one-letter code: Transcription antitermination protein NusB (134 aa).

Belongs to the NusB family.

Involved in transcription antitermination. Required for transcription of ribosomal RNA (rRNA) genes. Binds specifically to the boxA antiterminator sequence of the ribosomal RNA (rrn) operons. This Shewanella loihica (strain ATCC BAA-1088 / PV-4) protein is Transcription antitermination protein NusB.